The chain runs to 199 residues: MVLFSEDHIQETRRRGRIEVICGSMFSGKTEELIRRMKRAKFARQRVEIFKPAIDTRYSEEDVVSHDSHSIASTPIDSSASILLFTSEIDVVGIDEAQFFDDGLIDVCRQLANNGIRVIIAGLDMDFKGNPFGPMPQLCAIADEVSKVHAICVKCGDLASFSHRTVKNDKQVLLGETAEYEPLCRECYLRARGEDGQKI.

ATP-binding positions include 23–30 (GSMFSGKT) and 95–98 (DEAQ). E96 functions as the Proton acceptor in the catalytic mechanism. Zn(2+) contacts are provided by C152, C155, C184, and C187.

Belongs to the thymidine kinase family. In terms of assembly, homotetramer.

The protein localises to the cytoplasm. The enzyme catalyses thymidine + ATP = dTMP + ADP + H(+). This is Thymidine kinase from Bacteroides thetaiotaomicron (strain ATCC 29148 / DSM 2079 / JCM 5827 / CCUG 10774 / NCTC 10582 / VPI-5482 / E50).